A 158-amino-acid polypeptide reads, in one-letter code: MFDILMYLFENYVHSEVELLVDEDELTKELTRAGFHQSEILKALTWLERLAELQEGDKPYLCNHDQHSFRIYTKEEMEKLDVECRGFLLFLEQVKVLNVETREMVIDRVMELDEPALILEDLKWVILMVLFNAPGHESAYEQMEDLIFEQPEEGRLHS.

The protein belongs to the Smg family.

The chain is Protein Smg homolog from Shewanella sp. (strain MR-4).